The sequence spans 185 residues: Ribosome-recycling factor (185 aa).

The protein belongs to the RRF family.

It is found in the cytoplasm. Responsible for the release of ribosomes from messenger RNA at the termination of protein biosynthesis. May increase the efficiency of translation by recycling ribosomes from one round of translation to another. The sequence is that of Ribosome-recycling factor from Corynebacterium glutamicum (strain R).